The sequence spans 413 residues: Sporulation-specific protein 74 (413 aa).

The interval M1–G87 is disordered. Residues H69–D83 are compositionally biased toward basic and acidic residues.

Interacts with itself. Interacts with MPC54, NUD1 and SPO21/MPC70.

It is found in the cytoplasm. Its subcellular location is the cytoskeleton. It localises to the microtubule organizing center. The protein localises to the spindle pole body. In terms of biological role, involved in the pathway that organizes the shaping and sizing of the prospore membrane (PSM) during sporulation. Probable component of a core structural unit of the scaffold that initiates synthesis of the prospore membrane. The chain is Sporulation-specific protein 74 (SPO74) from Saccharomyces cerevisiae (strain ATCC 204508 / S288c) (Baker's yeast).